The chain runs to 226 residues: MNENLFATFITPTILGITTLPIIMLFPCLLLTSPKRWLPNRIQILQVWLIRLITKQMLTIHNKQGRSWALMLMSLILFIASTNLLGLLPYSFTPTTQLSMNIGMAIPLWLATVLMGFRNKPKISLAHFLPQGTPTPLVPMLIIIETISLFIQPVALAVRLTANITAGHLLIHLIGSATLALCSISVTVSTITFIILFLLTILELAVAMIQAYVFTLLVSLYLHDNS.

The next 6 membrane-spanning stretches (helical) occupy residues 6–26, 68–88, 97–117, 138–158, 164–184, and 193–213; these read FATF…IMLF, WALM…LGLL, QLSM…LMGF, VPML…ALAV, ITAG…LCSI, and FIIL…QAYV.

The protein belongs to the ATPase A chain family. In terms of assembly, component of the ATP synthase complex composed at least of ATP5F1A/subunit alpha, ATP5F1B/subunit beta, ATP5MC1/subunit c (homooctomer), MT-ATP6/subunit a, MT-ATP8/subunit 8, ATP5ME/subunit e, ATP5MF/subunit f, ATP5MG/subunit g, ATP5MK/subunit k, ATP5MJ/subunit j, ATP5F1C/subunit gamma, ATP5F1D/subunit delta, ATP5F1E/subunit epsilon, ATP5PF/subunit F6, ATP5PB/subunit b, ATP5PD/subunit d, ATP5PO/subunit OSCP. ATP synthase complex consists of a soluble F(1) head domain (subunits alpha(3) and beta(3)) - the catalytic core - and a membrane F(0) domain - the membrane proton channel (subunits c, a, 8, e, f, g, k and j). These two domains are linked by a central stalk (subunits gamma, delta, and epsilon) rotating inside the F1 region and a stationary peripheral stalk (subunits F6, b, d, and OSCP). Interacts with DNAJC30; interaction is direct.

The protein resides in the mitochondrion inner membrane. The catalysed reaction is H(+)(in) = H(+)(out). Subunit a, of the mitochondrial membrane ATP synthase complex (F(1)F(0) ATP synthase or Complex V) that produces ATP from ADP in the presence of a proton gradient across the membrane which is generated by electron transport complexes of the respiratory chain. ATP synthase complex consist of a soluble F(1) head domain - the catalytic core - and a membrane F(1) domain - the membrane proton channel. These two domains are linked by a central stalk rotating inside the F(1) region and a stationary peripheral stalk. During catalysis, ATP synthesis in the catalytic domain of F(1) is coupled via a rotary mechanism of the central stalk subunits to proton translocation. With the subunit c (ATP5MC1), forms the proton-conducting channel in the F(0) domain, that contains two crucial half-channels (inlet and outlet) that facilitate proton movement from the mitochondrial intermembrane space (IMS) into the matrix. Protons are taken up via the inlet half-channel and released through the outlet half-channel, following a Grotthuss mechanism. In Osphranter robustus (Wallaroo), this protein is ATP synthase F(0) complex subunit a.